Consider the following 212-residue polypeptide: Orotate phosphoribosyltransferase (212 aa).

5-phospho-alpha-D-ribose 1-diphosphate is bound by residues Arg94, Lys98, His100, and 120–128 (EDLISTGGS). Residue Ser124 participates in orotate binding.

Belongs to the purine/pyrimidine phosphoribosyltransferase family. PyrE subfamily. In terms of assembly, homodimer. Requires Mg(2+) as cofactor.

It catalyses the reaction orotidine 5'-phosphate + diphosphate = orotate + 5-phospho-alpha-D-ribose 1-diphosphate. It functions in the pathway pyrimidine metabolism; UMP biosynthesis via de novo pathway; UMP from orotate: step 1/2. Catalyzes the transfer of a ribosyl phosphate group from 5-phosphoribose 1-diphosphate to orotate, leading to the formation of orotidine monophosphate (OMP). This is Orotate phosphoribosyltransferase from Bacillus pumilus (strain SAFR-032).